A 421-amino-acid chain; its full sequence is ATP-dependent RNA helicase RhlB (421 aa).

The Q motif motif lies at 9-37 (QKFSDFALHPQVVEALEKKGFYNCTPIQA). Residues 40 to 219 (LPLTLAGRDV…FEQMNNAEYV (180 aa)) enclose the Helicase ATP-binding domain. 53 to 60 (AQTGTGKT) is an ATP binding site. Residues 165–168 (DEAD) carry the DEAD box motif. Residues 245 to 390 (RLLQTLIEEE…VSKYNPEALM (146 aa)) form the Helicase C-terminal domain. A disordered region spans residues 396-421 (PLRLTRSRPGNGPRRAGAPRNRRRSG). The span at 402 to 414 (SRPGNGPRRAGAP) shows a compositional bias: low complexity.

This sequence belongs to the DEAD box helicase family. RhlB subfamily. As to quaternary structure, component of the RNA degradosome, which is a multiprotein complex involved in RNA processing and mRNA degradation.

The protein resides in the cytoplasm. It carries out the reaction ATP + H2O = ADP + phosphate + H(+). In terms of biological role, DEAD-box RNA helicase involved in RNA degradation. Has RNA-dependent ATPase activity and unwinds double-stranded RNA. The polypeptide is ATP-dependent RNA helicase RhlB (Salmonella agona (strain SL483)).